Reading from the N-terminus, the 488-residue chain is Probable malate:quinone oxidoreductase (488 aa).

Belongs to the MQO family. It depends on FAD as a cofactor.

It catalyses the reaction (S)-malate + a quinone = a quinol + oxaloacetate. It participates in carbohydrate metabolism; tricarboxylic acid cycle; oxaloacetate from (S)-malate (quinone route): step 1/1. The sequence is that of Probable malate:quinone oxidoreductase from Neisseria meningitidis serogroup C (strain 053442).